A 212-amino-acid polypeptide reads, in one-letter code: NAD(P)H dehydrogenase (quinone) 3 (212 aa).

In terms of domain architecture, Flavodoxin-like spans 4 to 192; that stretch reads MLVLYYSSYG…DGARFQGRHV (189 aa). FMN is bound by residues 10 to 15 and 78 to 80; these read SSYGHI and TRF. Tyr-12 lines the NAD(+) pocket. Trp-98 provides a ligand contact to substrate. Residues 113–119 and His-134 each bind FMN; that span reads STGSQHG. Residues 161 to 182 form a disordered region; the sequence is YGASTLAEDENHRDRSPSANEL.

Belongs to the WrbA family. FMN is required as a cofactor.

It carries out the reaction a quinone + NADH + H(+) = a quinol + NAD(+). The catalysed reaction is a quinone + NADPH + H(+) = a quinol + NADP(+). The protein is NAD(P)H dehydrogenase (quinone) 3 of Rhizobium meliloti (strain 1021) (Ensifer meliloti).